A 450-amino-acid chain; its full sequence is Tubulin beta-3 chain (450 aa).

GTP contacts are provided by Gln11, Glu69, Ser138, Gly142, Thr143, Gly144, Asn204, and Asn226. A Mg(2+)-binding site is contributed by Glu69. Residues 420–450 (SEYQQYQDATADEEGDYEDEEEGEYQQEEEY) form a disordered region. Positions 429 to 450 (TADEEGDYEDEEEGEYQQEEEY) are enriched in acidic residues.

Belongs to the tubulin family. Dimer of alpha and beta chains. A typical microtubule is a hollow water-filled tube with an outer diameter of 25 nm and an inner diameter of 15 nM. Alpha-beta heterodimers associate head-to-tail to form protofilaments running lengthwise along the microtubule wall with the beta-tubulin subunit facing the microtubule plus end conferring a structural polarity. Microtubules usually have 13 protofilaments but different protofilament numbers can be found in some organisms and specialized cells. Requires Mg(2+) as cofactor.

The protein localises to the cytoplasm. The protein resides in the cytoskeleton. Functionally, tubulin is the major constituent of microtubules, a cylinder consisting of laterally associated linear protofilaments composed of alpha- and beta-tubulin heterodimers. Microtubules grow by the addition of GTP-tubulin dimers to the microtubule end, where a stabilizing cap forms. Below the cap, tubulin dimers are in GDP-bound state, owing to GTPase activity of alpha-tubulin. The protein is Tubulin beta-3 chain (TUBB3) of Arabidopsis thaliana (Mouse-ear cress).